The chain runs to 184 residues: MDTHGEKMKNLEIKKHSRGDLLLLRSSDLHSFRKLQREVDKMGLLSSAEQHLSGILTTLENVADQDNTLYCLTQRGELIGMLKIGTKRLYLYNGKDLHCRSCACLLDFYIRRDFRKRGLGLELFNFMLRDKAISPSRLCYDNPSHKLRSFLKKHFSPCALIKQPNNFVIFAEYFGEPEAAPFER.

The N-acetyltransferase domain occupies 1–174 (MDTHGEKMKN…NNFVIFAEYF (174 aa)). Residues 108-121 (FYIRRDFRKRGLGL) and 144-153 (SHKLRSFLKK) contribute to the acetyl-CoA site.

It belongs to the acetyltransferase ATAT1 family.

It carries out the reaction L-lysyl-[alpha-tubulin] + acetyl-CoA = N(6)-acetyl-L-lysyl-[alpha-tubulin] + CoA + H(+). Functionally, specifically acetylates 'Lys-40' in alpha-tubulin on the lumenal side of microtubules. Promotes microtubule destabilization and accelerates microtubule dynamics; this activity may be independent of acetylation activity. Acetylates alpha-tubulin with a slow enzymatic rate, due to a catalytic site that is not optimized for acetyl transfer. Enters the microtubule through each end and diffuses quickly throughout the lumen of microtubules. Acetylates only long/old microtubules because of its slow acetylation rate since it does not have time to act on dynamically unstable microtubules before the enzyme is released. This Plasmodium vivax (strain Salvador I) protein is Alpha-tubulin N-acetyltransferase.